Consider the following 75-residue polypeptide: Putative membrane protein insertion efficiency factor (75 aa).

Belongs to the UPF0161 family.

It is found in the cell membrane. Its function is as follows. Could be involved in insertion of integral membrane proteins into the membrane. This is Putative membrane protein insertion efficiency factor from Bacillus velezensis (strain DSM 23117 / BGSC 10A6 / LMG 26770 / FZB42) (Bacillus amyloliquefaciens subsp. plantarum).